The following is a 224-amino-acid chain: Endonuclease NucS (224 aa).

This sequence belongs to the NucS endonuclease family.

The protein resides in the cytoplasm. Cleaves both 3' and 5' ssDNA extremities of branched DNA structures. This Mycolicibacterium smegmatis (strain ATCC 700084 / mc(2)155) (Mycobacterium smegmatis) protein is Endonuclease NucS.